The chain runs to 229 residues: Vacuolar protein sorting-associated protein 24 homolog 1 (229 aa).

Residues 15 to 60 (KQLLRDWQRKLRQECRNIERQIRDIQKEERNVQKAIKEAAKRNDMV) adopt a coiled-coil conformation. The segment at 193 to 215 (VPAQKASTSREEEAVAEGVDDEE) is disordered. Residues 206-215 (AVAEGVDDEE) are compositionally biased toward acidic residues.

The protein belongs to the SNF7 family. As to quaternary structure, component of the endosomal sorting required for transport complex III (ESCRT-III), composed at least of VPS2, VPS20, VPS24 and VPS32. Interacts with SKD1.

The protein resides in the endosome. Component of the ESCRT-III complex, which is required for multivesicular bodies (MVBs) formation and sorting of endosomal cargo proteins into MVBs. The ESCRT-III complex is probably involved in the concentration of MVB cargo. The polypeptide is Vacuolar protein sorting-associated protein 24 homolog 1 (VPS24-1) (Arabidopsis thaliana (Mouse-ear cress)).